The primary structure comprises 481 residues: Ribulose bisphosphate carboxylase large chain (481 aa).

Residues 1-2 (MS) constitute a propeptide that is removed on maturation. Pro3 is modified (N-acetylproline). Position 14 is an N6,N6,N6-trimethyllysine (Lys14). Substrate is bound by residues Asn123 and Thr173. Residue Lys175 is the Proton acceptor of the active site. Lys177 is a binding site for substrate. Mg(2+) is bound by residues Lys201, Asp203, and Glu204. N6-carboxylysine is present on Lys201. His294 serves as the catalytic Proton acceptor. Substrate is bound by residues Arg295, His327, and Ser379.

This sequence belongs to the RuBisCO large chain family. Type I subfamily. Heterohexadecamer of 8 large chains and 8 small chains; disulfide-linked. The disulfide link is formed within the large subunit homodimers. Mg(2+) serves as cofactor. In terms of processing, the disulfide bond which can form in the large chain dimeric partners within the hexadecamer appears to be associated with oxidative stress and protein turnover.

The protein localises to the plastid. It catalyses the reaction 2 (2R)-3-phosphoglycerate + 2 H(+) = D-ribulose 1,5-bisphosphate + CO2 + H2O. The enzyme catalyses D-ribulose 1,5-bisphosphate + O2 = 2-phosphoglycolate + (2R)-3-phosphoglycerate + 2 H(+). Its function is as follows. RuBisCO catalyzes two reactions: the carboxylation of D-ribulose 1,5-bisphosphate, the primary event in carbon dioxide fixation, as well as the oxidative fragmentation of the pentose substrate in the photorespiration process. Both reactions occur simultaneously and in competition at the same active site. This Cuscuta obtusiflora (Peruvian dodder) protein is Ribulose bisphosphate carboxylase large chain.